We begin with the raw amino-acid sequence, 674 residues long: Probable 3',5'-cyclic-AMP phosphodiesterase pde-4 (674 aa).

The segment at 1 to 82 is disordered; the sequence is MPRRRGSSSS…TSSASSYHPP (82 aa). Residues 15-24 are compositionally biased toward gly residues; sequence GGSGGGGGFG. Low complexity predominate over residues 39–62; it reads RTSSPSASSTSRTPPAALPPRTSA. Residues 66 to 78 show a composition bias toward polar residues; the sequence is PGSNHKLTSSASS. The 333-residue stretch at 328–660 folds into the PDEase domain; that stretch reads HVPEYGVNCA…EWYQSRIPEE (333 aa). His-407 acts as the Proton donor in catalysis. Residues His-411, His-447, Asp-448, and Asp-565 each coordinate a divalent metal cation.

This sequence belongs to the cyclic nucleotide phosphodiesterase family. Requires a divalent metal cation as cofactor. Expressed in dorsal D (DD) motor neurons and several other neurons at the L1 stage. Expression in DD neurons decreases gradually beginning in the late L1 stage. Highly expressed in adult ventral D (VD) motor neurons, but diminished in adult DD motor neurons.

It carries out the reaction 3',5'-cyclic AMP + H2O = AMP + H(+). In terms of biological role, hydrolyzes the second messenger 3',5'-cyclic AMP (cAMP), which is a key regulator of many important physiological processes. Antagonizes dorsal D (DD) motor neuron respecification by reducing levels of cAMP. The sequence is that of Probable 3',5'-cyclic-AMP phosphodiesterase pde-4 (pde-4) from Caenorhabditis elegans.